The following is a 266-amino-acid chain: Decarboxylase tropJ (266 aa).

Glu-80 (proton acceptor) is an active-site residue. 4 residues coordinate Zn(2+): Glu-80, His-99, His-101, and His-180.

It belongs to the aldolase class II family. Zn(2+) serves as cofactor.

The protein operates within secondary metabolite biosynthesis. Decarboxylase; part of the gene cluster that mediates the biosynthesis of the tropolone class of fungal maleic anhydrides. The pathway begins with the synthesis of 3-methylorcinaldehyde by the non-reducing polyketide synthase (PKS) tropA. 3-methylorcinaldehyde is the substrate for the FAD-dependent monooxygenase tropB to yield a dearomatized hydroxycyclohexadione. The 2-oxoglutarate-dependent dioxygenase tropC then performs the oxidative ring expansion to provide the first tropolone metabolite stipitaldehyde. Trop D converts stipitaldehyde into stipitacetal which is in turn converted to stipitalide by the short-chain dehydrogenase/reductase tropE. The next steps involve tropF, tropG, tropH, tropI and tropJ to form successive tropolone maleic anhydrides including stipitaldehydic, stipitatonic and stipitatic acids. This Talaromyces stipitatus (strain ATCC 10500 / CBS 375.48 / QM 6759 / NRRL 1006) (Penicillium stipitatum) protein is Decarboxylase tropJ.